A 370-amino-acid polypeptide reads, in one-letter code: MMQSSLARPLPRPPIRPACGNPVCRSRPGSVSVARCRAEAAPPAPAPAARRAAGPYTGRDPEVKKPAWLRQRAAQGEKYARLRESIGELKLNTVCVEAQCPNIGECWNGGGGAGGEGDGIATATIMVLGDTCTRGCRFCAVKTSNKPPPPDPLEPLNTALAVASWGVDYVVLTSVDRDDLPDGGSSHFAQTVRALKELKPGILVECLTSDFRGDLEAVSALANSGLDVFAHNIETVRSLQRIVRDPRAGYDQSLAVLKHAKSCKEGMITKSSIMLGLGETDEEVKQAMIDLRAIGVDILTLGQYLQPTERHLTVREYVTPEKFQFWKEYGESVGFRYVASGPLVRSSYRAGELFVQNLVRNNKPKLPASS.

Disordered stretches follow at residues 1 to 25 (MMQSSLARPLPRPPIRPACGNPVCR) and 39 to 67 (EAAPPAPAPAARRAAGPYTGRDPEVKKPA). A chloroplast-targeting transit peptide spans 1–37 (MMQSSLARPLPRPPIRPACGNPVCRSRPGSVSVARCR). Positions 95, 100, 106, 132, 136, 139, and 347 each coordinate [4Fe-4S] cluster. Positions 115–336 (GEGDGIATAT…KEYGESVGFR (222 aa)) constitute a Radical SAM core domain.

This sequence belongs to the radical SAM superfamily. Lipoyl synthase family. [4Fe-4S] cluster serves as cofactor.

It is found in the plastid. The protein resides in the chloroplast. It carries out the reaction [[Fe-S] cluster scaffold protein carrying a second [4Fe-4S](2+) cluster] + N(6)-octanoyl-L-lysyl-[protein] + 2 oxidized [2Fe-2S]-[ferredoxin] + 2 S-adenosyl-L-methionine + 4 H(+) = [[Fe-S] cluster scaffold protein] + N(6)-[(R)-dihydrolipoyl]-L-lysyl-[protein] + 4 Fe(3+) + 2 hydrogen sulfide + 2 5'-deoxyadenosine + 2 L-methionine + 2 reduced [2Fe-2S]-[ferredoxin]. It participates in protein modification; protein lipoylation via endogenous pathway; protein N(6)-(lipoyl)lysine from octanoyl-[acyl-carrier-protein]: step 2/2. Catalyzes the radical-mediated insertion of two sulfur atoms into the C-6 and C-8 positions of the octanoyl moiety bound to the lipoyl domains of lipoate-dependent enzymes, thereby converting the octanoylated domains into lipoylated derivatives. In Oryza sativa subsp. indica (Rice), this protein is Lipoyl synthase 1, chloroplastic.